The following is a 381-amino-acid chain: L-lactate dehydrogenase (381 aa).

One can recognise an FMN hydroxy acid dehydrogenase domain in the interval Met-1–Lys-380. Tyr-24 is a substrate binding site. FMN contacts are provided by Ser-106 and Gln-127. Tyr-129 provides a ligand contact to substrate. Thr-155 lines the FMN pocket. Arg-164 is a substrate binding site. FMN is bound at residue Lys-251. The active-site Proton acceptor is the His-275. Arg-278 serves as a coordination point for substrate. Asp-306–Arg-330 contacts FMN.

It belongs to the FMN-dependent alpha-hydroxy acid dehydrogenase family. FMN serves as cofactor.

It localises to the cell inner membrane. The catalysed reaction is (S)-lactate + A = pyruvate + AH2. Functionally, catalyzes the conversion of L-lactate to pyruvate. Is coupled to the respiratory chain. The chain is L-lactate dehydrogenase from Haemophilus influenzae (strain PittEE).